The primary structure comprises 224 residues: 7-cyano-7-deazaguanine synthase (224 aa).

10–20 (LSGGLDSATVV) is an ATP binding site. Positions 189, 199, 202, and 205 each coordinate Zn(2+).

It belongs to the QueC family. It depends on Zn(2+) as a cofactor.

The catalysed reaction is 7-carboxy-7-deazaguanine + NH4(+) + ATP = 7-cyano-7-deazaguanine + ADP + phosphate + H2O + H(+). It functions in the pathway purine metabolism; 7-cyano-7-deazaguanine biosynthesis. Its function is as follows. Catalyzes the ATP-dependent conversion of 7-carboxy-7-deazaguanine (CDG) to 7-cyano-7-deazaguanine (preQ(0)). In Pseudomonas aeruginosa (strain LESB58), this protein is 7-cyano-7-deazaguanine synthase.